Reading from the N-terminus, the 70-residue chain is Large ribosomal subunit protein bL31 (70 aa).

Zn(2+)-binding residues include Cys16, Cys18, Cys37, and Cys40.

This sequence belongs to the bacterial ribosomal protein bL31 family. Type A subfamily. Part of the 50S ribosomal subunit. It depends on Zn(2+) as a cofactor.

Functionally, binds the 23S rRNA. In Desulfovibrio desulfuricans (strain ATCC 27774 / DSM 6949 / MB), this protein is Large ribosomal subunit protein bL31.